The primary structure comprises 343 residues: Protein RecA (343 aa).

It belongs to the RecA family.

The protein localises to the cytoplasm. Functionally, can catalyze the hydrolysis of ATP in the presence of single-stranded DNA, the ATP-dependent uptake of single-stranded DNA by duplex DNA, and the ATP-dependent hybridization of homologous single-stranded DNAs. It interacts with LexA causing its activation and leading to its autocatalytic cleavage. The polypeptide is Protein RecA (Coxiella burnetii (strain RSA 493 / Nine Mile phase I)).